The following is a 445-amino-acid chain: UDP-N-acetylmuramoylalanine--D-glutamate ligase (445 aa).

110–116 (GSNGKTT) contributes to the ATP binding site.

The protein belongs to the MurCDEF family.

The protein localises to the cytoplasm. The enzyme catalyses UDP-N-acetyl-alpha-D-muramoyl-L-alanine + D-glutamate + ATP = UDP-N-acetyl-alpha-D-muramoyl-L-alanyl-D-glutamate + ADP + phosphate + H(+). It participates in cell wall biogenesis; peptidoglycan biosynthesis. Cell wall formation. Catalyzes the addition of glutamate to the nucleotide precursor UDP-N-acetylmuramoyl-L-alanine (UMA). The sequence is that of UDP-N-acetylmuramoylalanine--D-glutamate ligase from Christiangramia forsetii (strain DSM 17595 / CGMCC 1.15422 / KT0803) (Gramella forsetii).